The sequence spans 366 residues: Probable quinol oxidase subunit 2 (366 aa).

The N-terminal stretch at 1-19 is a signal peptide; it reads MSKFKSLLLLFGTLILLSG. Cysteine 20 is lipidated: N-palmitoyl cysteine. Cysteine 20 carries the S-diacylglycerol cysteine lipid modification. Helical transmembrane passes span 38 to 58 and 80 to 100; these read FLIL…LGMF and AIIE…LAIP. The tract at residues 330–366 is disordered; it reads EPYNNEFKKDESKNAKEMKKISKDAQDQDNDDHGGGH. Positions 335-366 are enriched in basic and acidic residues; sequence EFKKDESKNAKEMKKISKDAQDQDNDDHGGGH.

It belongs to the cytochrome c oxidase subunit 2 family.

The protein resides in the cell membrane. The catalysed reaction is 2 a quinol + O2 = 2 a quinone + 2 H2O. Its function is as follows. Catalyzes quinol oxidation with the concomitant reduction of oxygen to water. Subunit II transfers the electrons from a quinol to the binuclear center of the catalytic subunit I. The protein is Probable quinol oxidase subunit 2 (qoxA) of Staphylococcus aureus (strain USA300).